A 162-amino-acid chain; its full sequence is Regulator of sigma D (162 aa).

The protein belongs to the Rsd/AlgQ family. Interacts with RpoD.

It is found in the cytoplasm. Binds RpoD and negatively regulates RpoD-mediated transcription activation by preventing the interaction between the primary sigma factor RpoD with the catalytic core of the RNA polymerase and with promoter DNA. May be involved in replacement of the RNA polymerase sigma subunit from RpoD to RpoS during the transition from exponential growth to the stationary phase. This chain is Regulator of sigma D, found in Salmonella paratyphi A (strain ATCC 9150 / SARB42).